A 137-amino-acid chain; its full sequence is Cytochrome b5 (137 aa).

The region spanning 6-82 is the Cytochrome b5 heme-binding domain; sequence KKVYTLEEVA…MDEYYVGDID (77 aa). Heme is bound by residues H41 and H65. A helical membrane pass occupies residues 108-128; it reads FIIKILQFLVPLAILGLAVAI.

The protein belongs to the cytochrome b5 family.

The protein localises to the endoplasmic reticulum membrane. The protein resides in the microsome membrane. In terms of biological role, membrane bound hemoprotein which function as an electron carrier for several membrane bound oxygenases. The protein is Cytochrome b5 of Oryza sativa subsp. japonica (Rice).